Reading from the N-terminus, the 341-residue chain is Retinol dehydrogenase 10 (341 aa).

The chain crosses the membrane as a helical; Signal-anchor span at residues 3–23; that stretch reads IVLEFFLVTFKVLWAFVLAAA. Residue 40–64 coordinates NADP(+); that stretch reads LITGAGSGLGRLFALEFARRRAQLV. Serine 197 serves as a coordination point for substrate. Tyrosine 210 acts as the Proton acceptor in catalysis.

It belongs to the short-chain dehydrogenases/reductases (SDR) family.

Its subcellular location is the microsome membrane. It is found in the endoplasmic reticulum membrane. The catalysed reaction is all-trans-retinol + NADP(+) = all-trans-retinal + NADPH + H(+). The protein operates within cofactor metabolism; retinol metabolism. In terms of biological role, retinol dehydrogenase with a clear preference for NADP. Converts all-trans-retinol to all-trans-retinal. Has no detectable activity towards 11-cis-retinol, 9-cis-retinol and 13-cis-retinol. This chain is Retinol dehydrogenase 10 (rdh10), found in Xenopus tropicalis (Western clawed frog).